Consider the following 134-residue polypeptide: Iron-sulfur cluster insertion protein ErpA (134 aa).

Iron-sulfur cluster contacts are provided by cysteine 47, cysteine 126, and cysteine 128.

This sequence belongs to the HesB/IscA family. Homodimer. It depends on iron-sulfur cluster as a cofactor.

Its function is as follows. Required for insertion of 4Fe-4S clusters for at least IspG. The chain is Iron-sulfur cluster insertion protein ErpA from Coxiella burnetii (strain RSA 331 / Henzerling II).